Here is a 448-residue protein sequence, read N- to C-terminus: Trigger factor (448 aa).

A PPIase FKBP-type domain is found at 161–246; the sequence is GDQVTIDFEG…VHKVAGKQLP (86 aa). The interval 428-448 is disordered; sequence ALQAAQQQEGAEEEAQEETSA. The span at 437 to 448 shows a compositional bias: acidic residues; that stretch reads GAEEEAQEETSA.

This sequence belongs to the FKBP-type PPIase family. Tig subfamily.

The protein localises to the cytoplasm. The catalysed reaction is [protein]-peptidylproline (omega=180) = [protein]-peptidylproline (omega=0). Involved in protein export. Acts as a chaperone by maintaining the newly synthesized protein in an open conformation. Functions as a peptidyl-prolyl cis-trans isomerase. The sequence is that of Trigger factor from Chromohalobacter salexigens (strain ATCC BAA-138 / DSM 3043 / CIP 106854 / NCIMB 13768 / 1H11).